A 441-amino-acid chain; its full sequence is Cysteine desulfurase, mitosomal (441 aa).

Residues 107-108 (AT), asparagine 189, glutamine 217, and 237-239 (SGH) contribute to the pyridoxal 5'-phosphate site. Position 240 is an N6-(pyridoxal phosphate)lysine (lysine 240). Threonine 277 is a binding site for pyridoxal 5'-phosphate. The active-site Cysteine persulfide intermediate is the cysteine 367. Cysteine 367 lines the [2Fe-2S] cluster pocket.

Belongs to the class-V pyridoxal-phosphate-dependent aminotransferase family. NifS/IscS subfamily. Interacts with ISD11. The cofactor is pyridoxal 5'-phosphate.

The protein localises to the mitosome. The enzyme catalyses (sulfur carrier)-H + L-cysteine = (sulfur carrier)-SH + L-alanine. Functionally, catalyzes the removal of elemental sulfur from cysteine to produce alanine. It supplies the inorganic sulfur for iron-sulfur (Fe-S) clusters in mitosomes. The polypeptide is Cysteine desulfurase, mitosomal (Trachipleistophora hominis (Microsporidian parasite)).